Consider the following 63-residue polypeptide: Protein DsrB (63 aa).

This sequence belongs to the DsrB family.

The sequence is that of Protein DsrB from Yersinia enterocolitica serotype O:8 / biotype 1B (strain NCTC 13174 / 8081).